A 334-amino-acid chain; its full sequence is MKVKVGINGYGTIGKRVAYAVTRQDDMKLIGVTKTKPDFEAYRAKELGIPVYAAGEEFLPRFENAGFEVAGTLSDLLEKVDVIVDATPGGMGAKNKAVYEKAGVKAIFQGGEKASTAEVSFVAQANYEKALGKDYVRVVSCNTTGLIRTLSAVQEYIDYVYAVMIRRAADPNDIKHGPINAIKPSVTVPSHHGPDVQTVIPINIETSAFVVPTTIMHVHSIMVELKKPLEAKDVIDIFENTTRVLLFEKEKGFESTAQLIEFARDLHREWNNLYEIAVWKESISVRGNRLFYIQAVHQESDVVPENIDAIRAMFEMADKWESIRKTNQSLGILK.

NAD(+)-binding positions include 12-13 (TI) and G111. 140 to 142 (SCN) lines the D-glyceraldehyde 3-phosphate pocket. C141 (nucleophile) is an active-site residue. R167 provides a ligand contact to NAD(+). A D-glyceraldehyde 3-phosphate-binding site is contributed by 192 to 193 (HG). An NAD(+)-binding site is contributed by Q298.

Belongs to the glyceraldehyde-3-phosphate dehydrogenase family. In terms of assembly, homotetramer.

It localises to the cytoplasm. It carries out the reaction D-glyceraldehyde 3-phosphate + phosphate + NADP(+) = (2R)-3-phospho-glyceroyl phosphate + NADPH + H(+). The catalysed reaction is D-glyceraldehyde 3-phosphate + phosphate + NAD(+) = (2R)-3-phospho-glyceroyl phosphate + NADH + H(+). Its pathway is carbohydrate degradation; glycolysis; pyruvate from D-glyceraldehyde 3-phosphate: step 1/5. The polypeptide is Glyceraldehyde-3-phosphate dehydrogenase (Thermococcus onnurineus (strain NA1)).